The sequence spans 636 residues: Chitin synthase VI (636 aa).

The next 4 helical transmembrane spans lie at 23–43, 374–394, 399–419, and 427–447; these read LQWF…LFCI, TIRT…TTTA, LPVG…LYFG, and IWFY…YMVY. The tract at residues 595–636 is disordered; it reads QRLRLEQRPRTGPSLNARWQNGPQASETSQGRSQVDDVGIAF. The segment covering 607 to 627 has biased composition (polar residues); sequence PSLNARWQNGPQASETSQGRS.

This sequence belongs to the chitin synthase family. Class VI subfamily. As to expression, moderately expressed during appressorium formation.

It is found in the cell membrane. The catalysed reaction is [(1-&gt;4)-N-acetyl-beta-D-glucosaminyl](n) + UDP-N-acetyl-alpha-D-glucosamine = [(1-&gt;4)-N-acetyl-beta-D-glucosaminyl](n+1) + UDP + H(+). Its function is as follows. Polymerizes chitin, a structural polymer of the cell wall and septum, by transferring the sugar moiety of UDP-GlcNAc to the non-reducing end of the growing chitin polymer. Contributes to the production of conidia but is the only chitine synthase that does not contribute to the ability of fungal conidia to germinate. Involved in fungal stress tolerances. In Metarhizium acridum (strain CQMa 102), this protein is Chitin synthase VI.